The sequence spans 505 residues: Glutamyl-tRNA(Gln) amidotransferase subunit A, mitochondrial (505 aa).

Catalysis depends on charge relay system residues Lys-76 and Ser-158. Ser-182 serves as the catalytic Acyl-ester intermediate.

Belongs to the amidase family. GatA subfamily. As to quaternary structure, subunit of the heterotrimeric GatCAB amidotransferase (AdT) complex, composed of A, B and C subunits.

The protein localises to the mitochondrion. The enzyme catalyses L-glutamyl-tRNA(Gln) + L-glutamine + ATP + H2O = L-glutaminyl-tRNA(Gln) + L-glutamate + ADP + phosphate + H(+). In terms of biological role, allows the formation of correctly charged Gln-tRNA(Gln) through the transamidation of misacylated Glu-tRNA(Gln) in the mitochondria. The reaction takes place in the presence of glutamine and ATP through an activated gamma-phospho-Glu-tRNA(Gln). The chain is Glutamyl-tRNA(Gln) amidotransferase subunit A, mitochondrial from Ixodes scapularis (Black-legged tick).